A 159-amino-acid polypeptide reads, in one-letter code: Phosphopantetheine adenylyltransferase (159 aa).

Position 10 (threonine 10) interacts with substrate. ATP-binding positions include 10–11 and histidine 18; that span reads TF. Substrate-binding residues include lysine 42, methionine 74, and arginine 88. ATP is bound by residues 89–91, glutamate 99, and 124–130; these read GLR and WSFISSS.

The protein belongs to the bacterial CoaD family. Homohexamer. Mg(2+) is required as a cofactor.

Its subcellular location is the cytoplasm. The enzyme catalyses (R)-4'-phosphopantetheine + ATP + H(+) = 3'-dephospho-CoA + diphosphate. It functions in the pathway cofactor biosynthesis; coenzyme A biosynthesis; CoA from (R)-pantothenate: step 4/5. Reversibly transfers an adenylyl group from ATP to 4'-phosphopantetheine, yielding dephospho-CoA (dPCoA) and pyrophosphate. This is Phosphopantetheine adenylyltransferase from Salmonella paratyphi A (strain ATCC 9150 / SARB42).